We begin with the raw amino-acid sequence, 283 residues long: MSRTPRVARSLSALRRELDSLRARKATVALVPTMGALHDGHISLVRQAKRRADKVVVSIFVNPTQFAPTEDFGSYPRTWKEDVAKLAAERVDLIWHPDAKAMYPDGFTTRIVPEGPALAGLEDRFRPHFFGGVATVVAKLFAQCRPDVAIFGEKDYQQLRVVTQMARDLDLGVRVVGSRTVRERDGLAMSSRNVYLSADERRVAPTLHRALKELASRLRAGGDMQDALRDGNATITQAGFDLDYLEVRHAETLAPVTQDESGPKRILVAARIGTTRLIDNIAV.

Residue 34-41 (MGALHDGH) participates in ATP binding. Residue H41 is the Proton donor of the active site. Q65 is a binding site for (R)-pantoate. Q65 lines the beta-alanine pocket. ATP is bound at residue 152–155 (GEKD). Q158 provides a ligand contact to (R)-pantoate. ATP is bound by residues V181 and 189 to 192 (MSSR).

Belongs to the pantothenate synthetase family. In terms of assembly, homodimer.

It is found in the cytoplasm. It catalyses the reaction (R)-pantoate + beta-alanine + ATP = (R)-pantothenate + AMP + diphosphate + H(+). It functions in the pathway cofactor biosynthesis; (R)-pantothenate biosynthesis; (R)-pantothenate from (R)-pantoate and beta-alanine: step 1/1. Functionally, catalyzes the condensation of pantoate with beta-alanine in an ATP-dependent reaction via a pantoyl-adenylate intermediate. This is Pantothenate synthetase from Bradyrhizobium sp. (strain BTAi1 / ATCC BAA-1182).